The sequence spans 320 residues: Cytochrome c1-1, heme protein, mitochondrial (320 aa).

Residues 1–77 (MSLGKKIRIG…LLSFATIAYS (77 aa)) constitute a mitochondrion transit peptide. The Mitochondrial intermembrane segment spans residues 78 to 280 (DEAEHGLECP…WAAEPEMEER (203 aa)). One can recognise a Cytochrome c domain in the interval 103-210 (ASIRRGHQVY…NGQNYVFALL (108 aa)). Heme c contacts are provided by Cys116, Cys119, His120, and Met239. A helical transmembrane segment spans residues 281–301 (KLMGFKWIFVLSLALLQAAYY). At 302 to 320 (RRLRWSVLKSRKLVLDVVN) the chain is on the mitochondrial matrix side.

It belongs to the cytochrome c family. Component of the ubiquinol-cytochrome c oxidoreductase (cytochrome b-c1 complex, complex III, CIII), a multisubunit enzyme composed of 3 respiratory subunits cytochrome b, cytochrome c1 and Rieske protein, 2 core protein subunits, and additional low-molecular weight protein subunits. The complex exists as an obligatory dimer and forms supercomplexes (SCs) in the inner mitochondrial membrane with cytochrome c oxidase (complex IV, CIV). It depends on heme c as a cofactor. As to expression, in all tissues analyzed.

The protein localises to the mitochondrion inner membrane. The enzyme catalyses a quinol + 2 Fe(III)-[cytochrome c](out) = a quinone + 2 Fe(II)-[cytochrome c](out) + 2 H(+)(out). In terms of biological role, component of the ubiquinol-cytochrome c oxidoreductase, a multisubunit transmembrane complex that is part of the mitochondrial electron transport chain which drives oxidative phosphorylation. The respiratory chain contains 3 multisubunit complexes succinate dehydrogenase (complex II, CII), ubiquinol-cytochrome c oxidoreductase (cytochrome b-c1 complex, complex III, CIII) and cytochrome c oxidase (complex IV, CIV), that cooperate to transfer electrons derived from NADH and succinate to molecular oxygen, creating an electrochemical gradient over the inner membrane that drives transmembrane transport and the ATP synthase. The cytochrome b-c1 complex catalyzes electron transfer from ubiquinol to cytochrome c, linking this redox reaction to translocation of protons across the mitochondrial inner membrane, with protons being carried across the membrane as hydrogens on the quinol. In the process called Q cycle, 2 protons are consumed from the matrix, 4 protons are released into the intermembrane space and 2 electrons are passed to cytochrome c. Cytochrome c1 is a catalytic core subunit containing a c-type heme. It transfers electrons from the [2Fe-2S] iron-sulfur cluster of the Rieske protein to cytochrome c. The chain is Cytochrome c1-1, heme protein, mitochondrial (CYCL) from Solanum tuberosum (Potato).